The chain runs to 305 residues: Protein EXORDIUM-like 2 (305 aa).

Residues 1–23 (MASNYRFAIFLTLFFATAGFSAA) form the signal peptide. Residue N44 is glycosylated (N-linked (GlcNAc...) asparagine).

Belongs to the EXORDIUM family.

It is found in the secreted. Its subcellular location is the extracellular space. The protein localises to the apoplast. Functionally, may play a role in a brassinosteroid-dependent regulation of growth and development. The chain is Protein EXORDIUM-like 2 (EXL2) from Arabidopsis thaliana (Mouse-ear cress).